The chain runs to 119 residues: Beta-2-microglobulin (119 aa).

The first 20 residues, 1 to 20, serve as a signal peptide directing secretion; that stretch reads MSRSVALAVLALLSLSGLEA. Residues 25-114 form the Ig-like C1-type domain; it reads PKIQVYSRHP…VTLSGPRTVK (90 aa). An intrachain disulfide couples Cys45 to Cys100.

This sequence belongs to the beta-2-microglobulin family. As to quaternary structure, heterodimer of an alpha chain and a beta chain. Beta-2-microglobulin is the beta-chain of major histocompatibility complex class I molecules.

The protein localises to the secreted. Its function is as follows. Component of the class I major histocompatibility complex (MHC). Involved in the presentation of peptide antigens to the immune system. This is Beta-2-microglobulin (B2M) from Papio anubis (Olive baboon).